A 168-amino-acid chain; its full sequence is Large ribosomal subunit protein bL9 (168 aa).

The segment at Q149 to E168 is disordered. A compositionally biased stretch (acidic residues) spans E152 to E168.

The protein belongs to the bacterial ribosomal protein bL9 family.

Functionally, binds to the 23S rRNA. This Desulfovibrio desulfuricans (strain ATCC 27774 / DSM 6949 / MB) protein is Large ribosomal subunit protein bL9.